We begin with the raw amino-acid sequence, 189 residues long: Elongation factor P-like protein (189 aa).

Belongs to the elongation factor P family.

This chain is Elongation factor P-like protein, found in Vibrio atlanticus (strain LGP32) (Vibrio splendidus (strain Mel32)).